The chain runs to 375 residues: Biotin synthase, mitochondrial (375 aa).

A mitochondrion-targeting transit peptide spans 1-16; the sequence is MMSTIYRHLSTARPAL. The region spanning 81–310 is the Radical SAM core domain; sequence HDPTKVQLCT…IATARIVMPK (230 aa). 3 residues coordinate [4Fe-4S] cluster: Cys-99, Cys-103, and Cys-106. 4 residues coordinate [2Fe-2S] cluster: Cys-143, Cys-176, Cys-236, and Arg-314.

This sequence belongs to the radical SAM superfamily. Biotin synthase family. The cofactor is [4Fe-4S] cluster. [2Fe-2S] cluster serves as cofactor.

It is found in the mitochondrion. The enzyme catalyses (4R,5S)-dethiobiotin + (sulfur carrier)-SH + 2 reduced [2Fe-2S]-[ferredoxin] + 2 S-adenosyl-L-methionine = (sulfur carrier)-H + biotin + 2 5'-deoxyadenosine + 2 L-methionine + 2 oxidized [2Fe-2S]-[ferredoxin]. It participates in cofactor biosynthesis; biotin biosynthesis; biotin from 7,8-diaminononanoate: step 2/2. This is Biotin synthase, mitochondrial (BIO2) from Saccharomyces cerevisiae (strain ATCC 204508 / S288c) (Baker's yeast).